The sequence spans 353 residues: Probable D-xylulose reductase A (353 aa).

The Zn(2+) site is built by Cys-42, His-67, and Glu-68. 177–182 (GAGPVG) contacts NAD(+).

Belongs to the zinc-containing alcohol dehydrogenase family. Zn(2+) serves as cofactor.

The catalysed reaction is xylitol + NAD(+) = D-xylulose + NADH + H(+). It participates in carbohydrate degradation; L-arabinose degradation via L-arabinitol; D-xylulose 5-phosphate from L-arabinose (fungal route): step 4/5. Functionally, xylitol dehydrogenase which catalyzes the conversion of xylitol to D-xylulose. Xylose is a major component of hemicelluloses such as xylan. Most fungi utilize D-xylose via three enzymatic reactions, xylose reductase (XR), xylitol dehydrogenase (XDH), and xylulokinase, to form xylulose 5-phosphate, which enters pentose phosphate pathway. This is Probable D-xylulose reductase A (xdhA) from Aspergillus terreus (strain NIH 2624 / FGSC A1156).